Consider the following 805-residue polypeptide: Sucrose synthase (805 aa).

Residues 275–752 (MVFNVVILSP…GLKRIQEKYT (478 aa)) are GT-B glycosyltransferase.

It belongs to the glycosyltransferase 1 family. Plant sucrose synthase subfamily.

It carries out the reaction an NDP-alpha-D-glucose + D-fructose = a ribonucleoside 5'-diphosphate + sucrose + H(+). Functionally, sucrose-cleaving enzyme that provides UDP-glucose and fructose for various metabolic pathways. The chain is Sucrose synthase from Solanum tuberosum (Potato).